A 100-amino-acid chain; its full sequence is Protein MEN-8 (100 aa).

An N-terminal signal peptide occupies residues 1 to 33; the sequence is MANNMKSATFCKATWAIFLVALAILVQLKGSEA. Intrachain disulfides connect C38-C76, C48-C65, C66-C91, and C78-C98.

The protein belongs to the A9/FIL1 family.

Its subcellular location is the secreted. The sequence is that of Protein MEN-8 (MEN-8) from Silene latifolia (White campion).